The following is a 101-amino-acid chain: Small ribosomal subunit protein uS14 (101 aa).

Belongs to the universal ribosomal protein uS14 family. As to quaternary structure, part of the 30S ribosomal subunit. Contacts proteins S3 and S10.

Its function is as follows. Binds 16S rRNA, required for the assembly of 30S particles and may also be responsible for determining the conformation of the 16S rRNA at the A site. The protein is Small ribosomal subunit protein uS14 of Pasteurella multocida (strain Pm70).